The chain runs to 577 residues: Proton channel OTOP3 (577 aa).

The interval 1-46 is disordered; it reads MASQTSAPAEPAPMPSPEAKTTEGASSYDQADMETKHAGSPCPPKQ. The Cytoplasmic segment spans residues 1–69; it reads MASQTSAPAE…RDRQAQKAGQ (69 aa). The helical transmembrane segment at 70–90 threads the bilayer; the sequence is LFSGLLALNVVFLGGAFICSM. Topologically, residues 91-100 are extracellular; the sequence is IFNKVSVTLG. The helical transmembrane segment at 101–124 threads the bilayer; sequence DVWILLAALKVLSLLWLLYYTVGT. At 125–140 the chain is on the cytoplasmic side; sequence TRKPHAVLYRDPHAGP. The chain crosses the membrane as a helical span at residues 141–162; sequence IWVRGSLVLFGSCTVCLNIFRM. Over 163–174 the chain is Extracellular; sequence GYDVSHIHCKSE. A helical transmembrane segment spans residues 175 to 198; it reads VELIFPAIEIVFMIIQTWVLWRHC. The Cytoplasmic segment spans residues 199–206; the sequence is KDCVQVQT. A helical transmembrane segment spans residues 207–229; that stretch reads NFTRCGLMLTLATNLLMWVLAVT. The Extracellular portion of the chain corresponds to 230–276; it reads NDSMHREIEAELDALMEKFSGNGTNTCMCLNTTVCEVFRKGYLMLYP. The chain crosses the membrane as a helical span at residues 277–293; the sequence is FSTEYCLICCAVLFVMW. At 294–319 the chain is on the cytoplasmic side; sequence KNVSRSLAAHTGAHPNRSPFRLHGTI. A helical membrane pass occupies residues 320 to 339; it reads FGPLLGLLALVAGVCVFVLF. Residues 340–353 lie on the Extracellular side of the membrane; it reads QIEASGPDIARQYF. A helical transmembrane segment spans residues 354-376; that stretch reads TLYYAFYVAVLPTMSLACLAGTA. Residues 377–394 are Cytoplasmic-facing; it reads IHGLEERELDTLKNPTRS. The helical transmembrane segment at 395 to 416 threads the bilayer; the sequence is LDVVLLMGAALGQMGIAYFSIV. Topologically, residues 417-427 are extracellular; that stretch reads AIVATQPHELL. The chain crosses the membrane as a helical span at residues 428-450; that stretch reads NQLILAYSLLLILQHITQNLFII. Residues 451-510 are Cytoplasmic-facing; it reads EGLHRRPLWEPAVSGVMEKQDVELPRRGSLRELGQDLRRASRAYIHSFSHLNWKRRMLKE. The helical transmembrane segment at 511–528 threads the bilayer; sequence ISLFLILCNITLWMMPAF. The Extracellular segment spans residues 529–547; it reads GIHPEFENGLEKDFYGYRT. Residues 548–570 form a helical membrane-spanning segment; it reads WFTIVNFGLPLGVFYRMHSVGGL. The Cytoplasmic portion of the chain corresponds to 571–577; that stretch reads VEVYLGA.

It belongs to the otopetrin family. As to quaternary structure, homodimer. Expressed in epidermis, small intestine, stomach and retina.

The protein localises to the cell membrane. It carries out the reaction H(+)(in) = H(+)(out). Activated by extracellular acidification. Activated by Zn(2+) under non-acidic conditions. In terms of biological role, proton-selective channel gated by extracellular protons. The polypeptide is Proton channel OTOP3 (Mus musculus (Mouse)).